The primary structure comprises 376 residues: tRNA-specific 2-thiouridylase MnmA (376 aa).

ATP-binding positions include 14–21 and M40; that span reads GMSGGVDS. The tract at residues 100–102 is interaction with target base in tRNA; that stretch reads NPD. Catalysis depends on C105, which acts as the Nucleophile. Residues C105 and C202 are joined by a disulfide bond. G129 provides a ligand contact to ATP. Residues 152–154 form an interaction with tRNA region; sequence KDQ. The active-site Cysteine persulfide intermediate is the C202. The tract at residues 315–316 is interaction with tRNA; the sequence is RY.

This sequence belongs to the MnmA/TRMU family.

The protein resides in the cytoplasm. The catalysed reaction is S-sulfanyl-L-cysteinyl-[protein] + uridine(34) in tRNA + AH2 + ATP = 2-thiouridine(34) in tRNA + L-cysteinyl-[protein] + A + AMP + diphosphate + H(+). Its function is as follows. Catalyzes the 2-thiolation of uridine at the wobble position (U34) of tRNA, leading to the formation of s(2)U34. This is tRNA-specific 2-thiouridylase MnmA from Lactococcus lactis subsp. cremoris (strain MG1363).